The following is a 151-amino-acid chain: 3-hydroxyacyl-[acyl-carrier-protein] dehydratase FabZ (151 aa).

His-54 is an active-site residue.

Belongs to the thioester dehydratase family. FabZ subfamily. In terms of assembly, oligomer. In terms of processing, the N-terminus is blocked.

Its subcellular location is the cytoplasm. The enzyme catalyses a (3R)-hydroxyacyl-[ACP] = a (2E)-enoyl-[ACP] + H2O. In terms of biological role, involved in unsaturated fatty acids biosynthesis. Catalyzes the dehydration of short chain beta-hydroxyacyl-ACPs and long chain saturated and unsaturated beta-hydroxyacyl-ACPs. The protein is 3-hydroxyacyl-[acyl-carrier-protein] dehydratase FabZ of Escherichia coli O9:H4 (strain HS).